A 95-amino-acid chain; its full sequence is Class I hydrophobin 13 (95 aa).

Cystine bridges form between cysteine 14-cysteine 74, cysteine 21-cysteine 68, cysteine 22-cysteine 55, and cysteine 75-cysteine 88. Asparagine 23 and asparagine 77 each carry an N-linked (GlcNAc...) asparagine glycan.

It belongs to the fungal hydrophobin family. In terms of assembly, self-assembles to form functional amyloid fibrils called rodlets. Self-assembly into fibrillar rodlets occurs spontaneously at hydrophobic:hydrophilic interfaces and the rodlets further associate laterally to form amphipathic monolayers.

The protein localises to the secreted. It localises to the cell wall. Aerial growth, conidiation, and dispersal of filamentous fungi in the environment rely upon a capability of their secreting small amphipathic proteins called hydrophobins (HPBs) with low sequence identity. Class I can self-assemble into an outermost layer of rodlet bundles on aerial cell surfaces, conferring cellular hydrophobicity that supports fungal growth, development and dispersal; whereas Class II form highly ordered films at water-air interfaces through intermolecular interactions but contribute nothing to the rodlet structure. In Pleurotus ostreatus (strain PC15) (Oyster mushroom), this protein is Class I hydrophobin 13.